Consider the following 125-residue polypeptide: Acyl carrier protein, mitochondrial (125 aa).

The N-terminal 36 residues, Met1–Tyr36, are a transit peptide targeting the mitochondrion. The Carrier domain occupies Asp43–Pro122. Ser82 is modified (O-(pantetheine 4'-phosphoryl)serine).

This sequence belongs to the acyl carrier protein (ACP) family. As to quaternary structure, complex I is composed of about 30 different subunits. Post-translationally, 4'-phosphopantetheine is transferred from CoA to a specific serine of apo-ACP by acpS. This modification is essential for activity because fatty acids are bound in thioester linkage to the sulfhydryl of the prosthetic group.

It is found in the mitochondrion. It functions in the pathway lipid metabolism; fatty acid biosynthesis. Carrier of the growing fatty acid chain in fatty acid biosynthesis. May be involved in the synthesis of very-long-chain fatty acids. Accessory and non-catalytic subunit of the mitochondrial membrane respiratory chain NADH dehydrogenase (Complex I), which functions in the transfer of electrons from NADH to the respiratory chain. This is Acyl carrier protein, mitochondrial (ACP1) from Saccharomyces cerevisiae (strain ATCC 204508 / S288c) (Baker's yeast).